Here is a 135-residue protein sequence, read N- to C-terminus: Fluoride-specific ion channel FluC (135 aa).

The next 4 membrane-spanning stretches (helical) occupy residues 7–27 (IAAISLGASLGALARYGLGLA), 37–57 (IGTLAANLIAAYVVGVTIAYV), 70–90 (FMITGLAGGLSTFSTFTAELF), and 105–125 (LGLHVGGSLALLMLGMLTIGL). The Na(+) site is built by Gly-77 and Ser-80.

It belongs to the fluoride channel Fluc/FEX (TC 1.A.43) family.

The protein localises to the cell inner membrane. It carries out the reaction fluoride(in) = fluoride(out). Na(+) is not transported, but it plays an essential structural role and its presence is essential for fluoride channel function. Its function is as follows. Fluoride-specific ion channel. Important for reducing fluoride concentration in the cell, thus reducing its toxicity. This chain is Fluoride-specific ion channel FluC, found in Xanthomonas oryzae pv. oryzae (strain MAFF 311018).